We begin with the raw amino-acid sequence, 201 residues long: Glutathione peroxidase 1 (201 aa).

Residue Ser-32 is modified to Phosphoserine. The active site involves Sec-47. Residue Sec-47 is a non-standard amino acid, selenocysteine. Residues Lys-86 and Lys-112 each carry the N6-acetyllysine; alternate modification. N6-succinyllysine; alternate occurs at positions 86 and 112. Lys-119 carries the N6-acetyllysine modification. The residue at position 146 (Lys-146) is an N6-acetyllysine; alternate. Lys-146 carries the post-translational modification N6-succinyllysine; alternate. 2 positions are modified to phosphoserine: Ser-195 and Ser-199.

The protein belongs to the glutathione peroxidase family. As to quaternary structure, homotetramer. Interacts with MIEN1. In terms of processing, during periods of oxidative stress, Sec-47 may react with a superoxide radical, irreversibly lose hydroselenide and be converted to dehydroalanine. As to expression, expressed in liver and lung.

The protein localises to the cytoplasm. It localises to the mitochondrion. The catalysed reaction is 2 glutathione + H2O2 = glutathione disulfide + 2 H2O. It carries out the reaction a hydroperoxy polyunsaturated fatty acid + 2 glutathione = a hydroxy polyunsaturated fatty acid + glutathione disulfide + H2O. It catalyses the reaction tert-butyl hydroperoxide + 2 glutathione = tert-butanol + glutathione disulfide + H2O. The enzyme catalyses cumene hydroperoxide + 2 glutathione = 2-phenylpropan-2-ol + glutathione disulfide + H2O. The catalysed reaction is (13S)-hydroperoxy-(9Z,11E)-octadecadienoate + 2 glutathione = (13S)-hydroxy-(9Z,11E)-octadecadienoate + glutathione disulfide + H2O. It carries out the reaction (9S)-hydroperoxy-(10E,12Z)-octadecadienoate + 2 glutathione = (9S)-hydroxy-(10E,12Z)-octadecadienoate + glutathione disulfide + H2O. It catalyses the reaction (5S)-hydroperoxy-(6E,8Z,11Z,14Z)-eicosatetraenoate + 2 glutathione = (5S)-hydroxy-(6E,8Z,11Z,14Z)-eicosatetraenoate + glutathione disulfide + H2O. The enzyme catalyses (12S)-hydroperoxy-(5Z,8Z,10E,14Z)-eicosatetraenoate + 2 glutathione = (12S)-hydroxy-(5Z,8Z,10E,14Z)-eicosatetraenoate + glutathione disulfide + H2O. The catalysed reaction is (12R)-hydroperoxy-(5Z,8Z,10E,14Z)-eicosatetraenoate + 2 glutathione = (12R)-hydroxy-(5Z,8Z,10E,14Z)-eicosatetraenoate + glutathione disulfide + H2O. It carries out the reaction (15S)-hydroperoxy-(5Z,8Z,11Z,13E)-eicosatetraenoate + 2 glutathione = (15S)-hydroxy-(5Z,8Z,11Z,13E)-eicosatetraenoate + glutathione disulfide + H2O. It catalyses the reaction (5S)-hydroperoxy-(6E,8Z,11Z,14Z,17Z)-eicosapentaenoate + 2 glutathione = (5S)-hydroxy-(6E,8Z,11Z,14Z,17Z)-eicosapentaenoate + glutathione disulfide + H2O. The enzyme catalyses (12S)-hydroperoxy-(5Z,8Z,10E,14Z,17Z)-eicosapentaenoate + 2 glutathione = (12S)-hydroxy-(5Z,8Z,10E,14Z,17Z)-eicosapentaenoate + glutathione disulfide + H2O. The catalysed reaction is (15S)-hydroperoxy-(5Z,8Z,11Z,13E,17Z)-eicosapentaenoate + 2 glutathione = (15S)-hydroxy-(5Z,8Z,11Z,13E,17Z)-eicosapentaenoate + glutathione disulfide + H2O. It carries out the reaction (15S)-hydroperoxy-(11Z,13E)-eicosadienoate + 2 glutathione = (15S)-hydroxy-(11Z,13E)-eicosadienoate + glutathione disulfide + H2O. It catalyses the reaction (17S)-hydroperoxy-(4Z,7Z,10Z,13Z,15E,19Z)-docosahexaenoate + 2 glutathione = (17S)-hydroxy-(4Z,7Z,10Z,13Z,15E,19Z)-docosahexaenoate + glutathione disulfide + H2O. Catalyzes the reduction of hydroperoxides in a glutathione-dependent manner thus regulating cellular redox homeostasis. Can reduce small soluble hydroperoxides such as H2O2, cumene hydroperoxide and tert-butyl hydroperoxide, as well as several fatty acid-derived hydroperoxides. In platelets catalyzes the reduction of 12-hydroperoxyeicosatetraenoic acid, the primary product of the arachidonate 12-lipoxygenase pathway. The sequence is that of Glutathione peroxidase 1 from Rattus norvegicus (Rat).